A 418-amino-acid chain; its full sequence is Tyrosine--tRNA ligase (418 aa).

Tyr-34 lines the L-tyrosine pocket. Positions 39–48 (PTADSLHLGH) match the 'HIGH' region motif. Tyr-169 and Gln-173 together coordinate L-tyrosine. The 'KMSKS' region motif lies at 229-233 (KFGKS). Residue Lys-232 participates in ATP binding. The S4 RNA-binding domain occupies 352-410 (LNIVELLVTSGIVNSKRQAREDVQNGAIYVNGERVQDLDYTLSDSDKIDGELTVIRRGK).

This sequence belongs to the class-I aminoacyl-tRNA synthetase family. TyrS type 1 subfamily. In terms of assembly, homodimer.

Its subcellular location is the cytoplasm. The enzyme catalyses tRNA(Tyr) + L-tyrosine + ATP = L-tyrosyl-tRNA(Tyr) + AMP + diphosphate + H(+). Catalyzes the attachment of tyrosine to tRNA(Tyr) in a two-step reaction: tyrosine is first activated by ATP to form Tyr-AMP and then transferred to the acceptor end of tRNA(Tyr). This is Tyrosine--tRNA ligase from Streptococcus suis (strain 98HAH33).